Here is a 276-residue protein sequence, read N- to C-terminus: METLELQGAKLRYHQVGQGPVLIFIPGANGTGDIFLPLAEQLKDHFTVVAVDRRDYGESELTEPLPDSASNPDSDYRVKRDAQDIAELAKSLSDEPVYILGSSSGSIVAMHVLKDYPEVVKKIAFHEPPINTFLPDSTYWKDKNDDIVHQILTEGLEKGMKTFGETLNIAPIDAKMMSQPADTEEGRIEQYKRTMFWSEFEIRQYTHSDITLDDFTKYSDKITLLNGTDSRGSFPQDVNFYINKETSIPIVDIPGGHLGYIQKPEGFADVLLNMWG.

The AB hydrolase-1 domain maps to 20-137; that stretch reads PVLIFIPGAN…PPINTFLPDS (118 aa). The segment at 57–76 is disordered; the sequence is GESELTEPLPDSASNPDSDY.

Belongs to the AB hydrolase superfamily.

This is an uncharacterized protein from Staphylococcus aureus (strain MW2).